A 454-amino-acid polypeptide reads, in one-letter code: OTU domain-containing protein 1 (454 aa).

Disordered stretches follow at residues Gln36–Ala64 and Leu116–Asp257. The span at Arg52–Ala64 shows a compositional bias: low complexity. Residues Leu116 to Pro125 are compositionally biased toward pro residues. Basic and acidic residues-rich tracts occupy residues Asp151 to Gln164, Gly193 to Gly210, and Ala219 to Ala229. The region spanning Lys282–His411 is the OTU domain. Residues Ile287–Cys293 form a cys-loop region. Asp290 is a catalytic residue. The active-site Nucleophile is the Cys293. A his-loop region spans residues Ala342–Pro352. The variable-loop stretch occupies residues Trp399 to His404. Residue His404 is part of the active site. One can recognise a UIM domain in the interval Lys430–Glu449.

It carries out the reaction Thiol-dependent hydrolysis of ester, thioester, amide, peptide and isopeptide bonds formed by the C-terminal Gly of ubiquitin (a 76-residue protein attached to proteins as an intracellular targeting signal).. Its function is as follows. Deubiquitinating enzyme that specifically hydrolyzes 'Lys-63'-linked polyubiquitin to monoubiquitin. Required for the stability and translation of a subset mRNAs with a high abundance of rare codons by mediating deubiquitination of 40S ribosomal protein RPS10/eS10, thereby antagonizing ZNF598-mediated 40S ubiquitination. The abundance of rare codons in mRNAs can limit the translation rate and can lead to ribosome collisions that trigger activation of ribosome quality control (RQC) pathway by ZNF598. OTUD1-mediated deubiquitination prevents activation of the RQC and subsequent dissociation of ribosomes and stimulates formation of polysomes and translation. The chain is OTU domain-containing protein 1 (Otud1) from Mus musculus (Mouse).